Here is a 121-residue protein sequence, read N- to C-terminus: MRNWRWLLLVLAVLLAWLQYRFWFGPGNSGEVMMLEAQVAHQTQDNEGLRQRNQALAAEVKDLKDGEAAIEERARSELGMIKPGETFYRVVEDAPLPAPASPEAPAPPQQAPEPIDPVDHP.

The Cytoplasmic segment spans residues 1 to 6 (MRNWRW). The helical transmembrane segment at 7 to 24 (LLLVLAVLLAWLQYRFWF) threads the bilayer. The Periplasmic portion of the chain corresponds to 25–121 (GPGNSGEVMM…PEPIDPVDHP (97 aa)). Residues 31–66 (EVMMLEAQVAHQTQDNEGLRQRNQALAAEVKDLKDG) are a coiled coil. Positions 92-121 (EDAPLPAPASPEAPAPPQQAPEPIDPVDHP) are disordered. Residues 96-115 (LPAPASPEAPAPPQQAPEPI) show a composition bias toward pro residues.

The protein belongs to the FtsB family. In terms of assembly, part of a complex composed of FtsB, FtsL and FtsQ.

It is found in the cell inner membrane. Its function is as follows. Essential cell division protein. May link together the upstream cell division proteins, which are predominantly cytoplasmic, with the downstream cell division proteins, which are predominantly periplasmic. The chain is Cell division protein FtsB from Xanthomonas euvesicatoria pv. vesicatoria (strain 85-10) (Xanthomonas campestris pv. vesicatoria).